The chain runs to 403 residues: Accessory Sec system protein translocase subunit SecY2 (403 aa).

10 helical membrane-spanning segments follow: residues 17–37 (MLYT…SIVS), 63–83 (LNIF…LMLI), 105–125 (ILTL…YVSK), 131–151 (DNIY…VWLA), 157–177 (YGIA…MMHQ), 186–206 (HIVI…LLFI), 240–260 (ITLM…HFIL), 276–296 (FDSP…GYFL), 339–359 (WFGL…TLFV), and 366–386 (IYFS…AETI).

Belongs to the SecY/SEC61-alpha family. SecY2 subfamily. May form heterotrimers with SecE and SecG subunits (Potential). Component of the accessory SecA2/SecY2 protein translocase complex required to export cell wall protein SrpA.

It is found in the cell membrane. Functionally, the central subunit of a protein translocation channel (Potential). Part of the accessory SecA2/SecY2 system specifically required to export SraP, a serine-rich repeat cell wall protein encoded upstream in the same operon. The sequence is that of Accessory Sec system protein translocase subunit SecY2 from Staphylococcus aureus (strain NCTC 8325 / PS 47).